The primary structure comprises 65 residues: Large ribosomal subunit protein bL35 (65 aa).

Disordered regions lie at residues 1–23 (MPKL…GGFK) and 36–65 (MTTK…MPYA). The segment covering 54–65 (DTTSLVQQMPYA) has biased composition (polar residues).

Belongs to the bacterial ribosomal protein bL35 family.

In Francisella tularensis subsp. tularensis (strain FSC 198), this protein is Large ribosomal subunit protein bL35.